The primary structure comprises 353 residues: Quinolinate synthase (353 aa).

His-47 and Ser-68 together coordinate iminosuccinate. Position 113 (Cys-113) interacts with [4Fe-4S] cluster. Iminosuccinate-binding positions include 139-141 and Ser-156; that span reads YAN. [4Fe-4S] cluster is bound at residue Cys-200. Iminosuccinate-binding positions include 226–228 and Thr-243; that span reads HPE. Cys-297 contacts [4Fe-4S] cluster.

It belongs to the quinolinate synthase family. Type 1 subfamily. The cofactor is [4Fe-4S] cluster.

The protein resides in the cytoplasm. It catalyses the reaction iminosuccinate + dihydroxyacetone phosphate = quinolinate + phosphate + 2 H2O + H(+). It participates in cofactor biosynthesis; NAD(+) biosynthesis; quinolinate from iminoaspartate: step 1/1. Its function is as follows. Catalyzes the condensation of iminoaspartate with dihydroxyacetone phosphate to form quinolinate. This chain is Quinolinate synthase, found in Vibrio cholerae serotype O1 (strain ATCC 39541 / Classical Ogawa 395 / O395).